The sequence spans 266 residues: Gas vesicle protein L (266 aa).

It belongs to the gas vesicle GvpF/GvpL family.

It localises to the gas vesicle. Its function is as follows. Might be involved in nucleating gas vesicle formation. A minor component of the gas vesicle. Gas vesicles are hollow, gas filled proteinaceous nanostructures found in some microorganisms. It is not clear what function gas vesicles perform in soil bacteria. This Streptomyces sp. (strain CB03234) protein is Gas vesicle protein L.